The primary structure comprises 583 residues: Laccase-21 (583 aa).

An N-terminal signal peptide occupies residues 1 to 29 (MGIAKIPAVLWLLACAVLTFAVAISPAHG). Plastocyanin-like domains follow at residues 39-155 (FITE…PKHG) and 165-323 (KEIP…YYTG). Asparagine 85 carries N-linked (GlcNAc...) asparagine glycosylation. Histidine 89, histidine 91, histidine 134, and histidine 136 together coordinate Cu cation. 7 N-linked (GlcNAc...) asparagine glycosylation sites follow: asparagine 282, asparagine 311, asparagine 384, asparagine 387, asparagine 399, asparagine 409, and asparagine 446. Residues 436–567 (FPNNPAPVFV…NTVFIVKDGK (132 aa)) enclose the Plastocyanin-like 3 domain. 8 residues coordinate Cu cation: histidine 484, histidine 487, histidine 489, histidine 546, cysteine 547, histidine 548, histidine 552, and methionine 557.

The protein belongs to the multicopper oxidase family. Cu cation is required as a cofactor.

Its subcellular location is the secreted. It localises to the extracellular space. It is found in the apoplast. It catalyses the reaction 4 hydroquinone + O2 = 4 benzosemiquinone + 2 H2O. In terms of biological role, lignin degradation and detoxification of lignin-derived products. This chain is Laccase-21 (LAC21), found in Oryza sativa subsp. japonica (Rice).